The sequence spans 229 residues: Octanoyltransferase (229 aa).

The 194-residue stretch at 30 to 223 (PDTPDTIWLV…QLQQRAQAHP (194 aa)) folds into the BPL/LPL catalytic domain. Residues 69–76 (RGGQITYH), 141–143 (ALG), and 154–156 (GVS) each bind substrate. Cysteine 172 acts as the Acyl-thioester intermediate in catalysis.

This sequence belongs to the LipB family.

It is found in the cytoplasm. The enzyme catalyses octanoyl-[ACP] + L-lysyl-[protein] = N(6)-octanoyl-L-lysyl-[protein] + holo-[ACP] + H(+). It functions in the pathway protein modification; protein lipoylation via endogenous pathway; protein N(6)-(lipoyl)lysine from octanoyl-[acyl-carrier-protein]: step 1/2. Its function is as follows. Catalyzes the transfer of endogenously produced octanoic acid from octanoyl-acyl-carrier-protein onto the lipoyl domains of lipoate-dependent enzymes. Lipoyl-ACP can also act as a substrate although octanoyl-ACP is likely to be the physiological substrate. This is Octanoyltransferase from Ralstonia pickettii (strain 12J).